A 361-amino-acid chain; its full sequence is uncharacterized protein (361 aa).

Disordered regions lie at residues 53–75 (KNIS…NINN) and 150–211 (NYNN…YHHY). Low complexity predominate over residues 150 to 198 (NYNNYNNNNNNNNNNNNNNNNNNNNNNNNNNNNNNKNNNKNNNNKPNNF). Residues 199 to 211 (IHHHHHHHHYHHY) are compositionally biased toward basic residues. Residues 225-245 (IFIGLMAFLILFILMVIGLLI) form a helical membrane-spanning segment.

The protein localises to the membrane. This is an uncharacterized protein from Dictyostelium discoideum (Social amoeba).